The following is a 293-amino-acid chain: Pantothenate synthetase (293 aa).

Residue 30–37 (MGYLHKGH) coordinates ATP. His37 acts as the Proton donor in catalysis. Gln61 serves as a coordination point for (R)-pantoate. Position 61 (Gln61) interacts with beta-alanine. Position 147-150 (147-150 (GEKD)) interacts with ATP. Gln153 is a (R)-pantoate binding site. ATP-binding positions include Val176 and 184–187 (CSSR).

Belongs to the pantothenate synthetase family. Homodimer.

The protein localises to the cytoplasm. It catalyses the reaction (R)-pantoate + beta-alanine + ATP = (R)-pantothenate + AMP + diphosphate + H(+). It functions in the pathway cofactor biosynthesis; (R)-pantothenate biosynthesis; (R)-pantothenate from (R)-pantoate and beta-alanine: step 1/1. Its function is as follows. Catalyzes the condensation of pantoate with beta-alanine in an ATP-dependent reaction via a pantoyl-adenylate intermediate. This Brucella canis (strain ATCC 23365 / NCTC 10854 / RM-666) protein is Pantothenate synthetase.